The chain runs to 2170 residues: ATP-binding cassette sub-family A member 7 (2170 aa).

A helical membrane pass occupies residues 22-42 (PIQLVVELLWPLFLFFILVAV). Residues 43-547 (RHSHPPLEHH…DVFLRVLSRS (505 aa)) are Extracellular-facing. The cysteines at positions 75 and 222 are disulfide-linked. Residue asparagine 309 is glycosylated (N-linked (GlcNAc...) asparagine). A run of 6 helical transmembrane segments spans residues 548 to 568 (LPLF…KAVV), 591 to 611 (LGWF…LVLV), 624 to 644 (VVVF…SFLL), 653 to 673 (LAAA…VLCV), 679 to 699 (LPLG…GFGC), and 733 to 753 (AFLL…EAVC). In terms of domain architecture, ABC transporter 1 spans 805-1036 (VSIRGLKKHF…LGCGYYLTLV (232 aa)). Residue 839–846 (GHNGAGKT) coordinates ATP. A helical membrane pass occupies residues 847–867 (TTLSILSGLFPPSSGSASILG). Residues 1044–1086 (THDLKGDTEDPRREKKSGSEGKTADTVLTRDGPHRSSQVPAPD) form a disordered region. Positions 1045–1066 (HDLKGDTEDPRREKKSGSEGKT) are enriched in basic and acidic residues. Residues 1257 to 1277 (IVLPALFVGLALFFTLIVPPF) form a helical membrane-spanning segment. Over 1278-1562 (GQYPPLQLSP…TLIASSVDVL (285 aa)) the chain is Extracellular. A disulfide bond links cysteine 1370 and cysteine 1384. A run of 6 helical transmembrane segments spans residues 1563–1583 (VSIC…LVLI), 1609–1629 (FLWD…IFLA), 1646–1666 (LLLL…SFFF), 1674–1694 (VVLT…TFVL), 1708–1728 (ILKQ…LIDM), and 1754–1774 (IIGK…LITL). Positions 1818-2050 (LVLRDLTKVY…FGAGHTLTLR (233 aa)) constitute an ABC transporter 2 domain. An ATP-binding site is contributed by 1852–1859 (GVNGAGKT). The segment at 2129–2170 (QGEEEEGSGQETETREVSTPGLQHPKRVSRFLEDPSSVETVI) is disordered.

This sequence belongs to the ABC transporter superfamily. ABCA family. N-glycosylated. Expressed in blood cells. Also detected in brain and ovary tissues (at protein level). Expressed in platelet.

Its subcellular location is the cell membrane. It is found in the golgi apparatus membrane. The protein localises to the early endosome membrane. The protein resides in the cell projection. It localises to the ruffle membrane. Its subcellular location is the phagocytic cup. It is found in the cytoplasm. Its function is as follows. ATP-binding cassette (ABC) transporter that plays a role in lipid homeostasis and macrophage-mediated phagocytosis. Binds APOA1 and may function in apolipoprotein-mediated phospholipid efflux from cells. May also mediate cholesterol efflux. May regulate cellular ceramide homeostasis during keratinocyte differentiation. Involved in lipid raft organization and CD1D localization on thymocytes and antigen-presenting cells, which plays an important role in natural killer T-cell development and activation. Plays a role in phagocytosis of apoptotic cells by macrophages. Macrophage phagocytosis is stimulated by APOA1 or APOA2, probably by stabilization of ABCA7. Also involved in phagocytic clearance of amyloid-beta by microglia cells and macrophages. Further limits amyloid-beta production by playing a role in the regulation of amyloid-beta A4 precursor protein (APP) endocytosis and/or processing. The chain is ATP-binding cassette sub-family A member 7 (Abca7) from Rattus norvegicus (Rat).